The chain runs to 94 residues: Large ribosomal subunit protein uL23 (94 aa).

Belongs to the universal ribosomal protein uL23 family. As to quaternary structure, part of the 50S ribosomal subunit. Contacts protein L29, and trigger factor when it is bound to the ribosome.

In terms of biological role, one of the early assembly proteins it binds 23S rRNA. One of the proteins that surrounds the polypeptide exit tunnel on the outside of the ribosome. Forms the main docking site for trigger factor binding to the ribosome. This is Large ribosomal subunit protein uL23 from Dehalococcoides mccartyi (strain ATCC BAA-2100 / JCM 16839 / KCTC 5957 / BAV1).